The chain runs to 379 residues: Chaperone protein DnaJ (379 aa).

Residues 5 to 70 form the J domain; the sequence is DFYEVLGVSR…QKRSAYDQYG (66 aa). A CR-type zinc finger spans residues 134–212; the sequence is GCDKEIEVPT…CHGEGRVHKT (79 aa). Zn(2+)-binding residues include C147, C150, C164, C167, C186, C189, C200, and C203. CXXCXGXG motif repeat units follow at residues 147–154, 164–171, 186–193, and 200–207; these read CDPCEGTG, CSTCHGQG, CPTCHGKG, and CNSCHGEG.

The protein belongs to the DnaJ family. Homodimer. Requires Zn(2+) as cofactor.

The protein resides in the cytoplasm. In terms of biological role, participates actively in the response to hyperosmotic and heat shock by preventing the aggregation of stress-denatured proteins and by disaggregating proteins, also in an autonomous, DnaK-independent fashion. Unfolded proteins bind initially to DnaJ; upon interaction with the DnaJ-bound protein, DnaK hydrolyzes its bound ATP, resulting in the formation of a stable complex. GrpE releases ADP from DnaK; ATP binding to DnaK triggers the release of the substrate protein, thus completing the reaction cycle. Several rounds of ATP-dependent interactions between DnaJ, DnaK and GrpE are required for fully efficient folding. Also involved, together with DnaK and GrpE, in the DNA replication of plasmids through activation of initiation proteins. This is Chaperone protein DnaJ from Aliivibrio fischeri (strain ATCC 700601 / ES114) (Vibrio fischeri).